Reading from the N-terminus, the 665-residue chain is Succinate dehydrogenase [ubiquinone] flavoprotein subunit B, mitochondrial (665 aa).

A mitochondrion-targeting transit peptide spans 1-45; the sequence is MALLKVAPSRLLSRALQLTSTLQNCTATSIAARRNFHFTVYGRKD. Alanine 72, alanine 75, threonine 94, lysine 95, and serine 101 together coordinate FAD. At histidine 102 the chain carries Tele-8alpha-FAD histidine. The FAD site is built by threonine 103, glycine 108, alanine 224, and aspartate 278. The oxaloacetate site is built by histidine 299, arginine 343, and histidine 410. Arginine 343 serves as the catalytic Proton acceptor. Residue glutamate 443 coordinates FAD. The oxaloacetate site is built by arginine 454 and alanine 457. Residues serine 459 and leucine 460 each contribute to the FAD site.

Belongs to the FAD-dependent oxidoreductase 2 family. FRD/SDH subfamily. Component of complex II composed of four subunits: a flavoprotein (FP), an iron-sulfur protein (IP), and a cytochrome b composed of a large and a small subunit. It depends on FAD as a cofactor.

It is found in the mitochondrion inner membrane. It carries out the reaction a ubiquinone + succinate = a ubiquinol + fumarate. The catalysed reaction is (R)-malate + a quinone = enol-oxaloacetate + a quinol. It catalyses the reaction (S)-malate + a quinone = enol-oxaloacetate + a quinol. It functions in the pathway carbohydrate metabolism; tricarboxylic acid cycle; fumarate from succinate (eukaryal route): step 1/1. Its activity is regulated as follows. Enol-oxaloacetate inhibits the succinate dehydrogenase activity. Flavoprotein (FP) subunit of succinate dehydrogenase (SDH) that is involved in complex II of the mitochondrial electron transport chain and is responsible for transferring electrons from succinate to ubiquinone (coenzyme Q). SDH also oxidizes malate to the non-canonical enol form of oxaloacetate, enol-oxaloacetate. Enol-oxaloacetate, which is a potent inhibitor of the succinate dehydrogenase activity, is further isomerized into keto-oxaloacetate. In Xenopus laevis (African clawed frog), this protein is Succinate dehydrogenase [ubiquinone] flavoprotein subunit B, mitochondrial (sdha-b).